A 423-amino-acid polypeptide reads, in one-letter code: MDIDQYMTDLGRRARHASRAMARASTAAKNAALDAVARAIERDAQALKDANARDVARAREKGLDAAFIDRLTLSDNALKTMVEGLRQVASLADPIGEIGNLKYRPSGIRVGQMRVPLGVIGIIYESRPNVTIDAAALCLKSGNATILRGGSEALESNAALAKLIGEGLEAAGLPQDAVQVVATADRAAVGKLITMTDYVDVIVPRGGKSLIERLINEARVPMIKHLDGICHVYVDDRADLAKALTVCDNAKTHRYGTCNTMETLLVASGIAATLLPPLGKLYRDKQVELRVDAAARAVLAEAGVGPLVDATDEDWHTEYLAPVLAIKVVDGLDAAIEHINHYGSHHTDAIVTEDHDRAMRFLREVDSASVMVNASTRFADGFEFGLGAEIGISNDKLHARGPVGLEGLTSLKYVVLGHGEGRQ.

The protein belongs to the gamma-glutamyl phosphate reductase family.

The protein resides in the cytoplasm. It catalyses the reaction L-glutamate 5-semialdehyde + phosphate + NADP(+) = L-glutamyl 5-phosphate + NADPH + H(+). Its pathway is amino-acid biosynthesis; L-proline biosynthesis; L-glutamate 5-semialdehyde from L-glutamate: step 2/2. Catalyzes the NADPH-dependent reduction of L-glutamate 5-phosphate into L-glutamate 5-semialdehyde and phosphate. The product spontaneously undergoes cyclization to form 1-pyrroline-5-carboxylate. This chain is Gamma-glutamyl phosphate reductase, found in Burkholderia ambifaria (strain MC40-6).